Consider the following 150-residue polypeptide: Large ribosomal subunit protein bL9 (150 aa).

It belongs to the bacterial ribosomal protein bL9 family.

Its function is as follows. Binds to the 23S rRNA. This Streptococcus agalactiae serotype Ia (strain ATCC 27591 / A909 / CDC SS700) protein is Large ribosomal subunit protein bL9.